A 224-amino-acid polypeptide reads, in one-letter code: MNSQFKLIGFDLDGTLVNSLPDLALSVNSALAEFELPQAPEELVLTWIGNGADILIGRALDWAKEQSGKSLTDEQTAQLKERFSFYYAENLCNVSRLYPNVKETLETLKEQGFILAVVTNKPTRHVQPVLKAFAIDHLFSETLGGQSLPAIKPHPAPLYYLCGKFGLYPHQILFVGDSRNDILAAHSAGCTAVGLTYGYNYNMPIADSHPDWIFEDFADLLKIV.

The active-site Nucleophile is Asp11. 3 residues coordinate Mg(2+): Asp11, Asp13, and Asp177.

It belongs to the HAD-like hydrolase superfamily. CbbY/CbbZ/Gph/YieH family. Mg(2+) serves as cofactor.

It catalyses the reaction 2-phosphoglycolate + H2O = glycolate + phosphate. Its pathway is organic acid metabolism; glycolate biosynthesis; glycolate from 2-phosphoglycolate: step 1/1. Functionally, specifically catalyzes the dephosphorylation of 2-phosphoglycolate. Is involved in the dissimilation of the intracellular 2-phosphoglycolate formed during the DNA repair of 3'-phosphoglycolate ends, a major class of DNA lesions induced by oxidative stress. The chain is Phosphoglycolate phosphatase from Mannheimia succiniciproducens (strain KCTC 0769BP / MBEL55E).